Consider the following 995-residue polypeptide: DNA polymerase (995 aa).

This sequence belongs to the DNA polymerase type-B family.

It carries out the reaction DNA(n) + a 2'-deoxyribonucleoside 5'-triphosphate = DNA(n+1) + diphosphate. The protein is DNA polymerase (RF1) of Kluyveromyces lactis (strain ATCC 8585 / CBS 2359 / DSM 70799 / NBRC 1267 / NRRL Y-1140 / WM37) (Yeast).